We begin with the raw amino-acid sequence, 434 residues long: Glutamate/glutamine/aspartate/asparagine transport system permease protein BztC (434 aa).

10 helical membrane passes run 41–61 (LTVF…PWLL), 113–133 (LFVT…DALP), 135–155 (KLIW…WGGP), 156–176 (IWGP…FTAL), 180–200 (LGVP…WLYA), 227–247 (FLLA…LGIL), 272–292 (GVPL…FLPP), 298–318 (LILR…AEVI), 360–380 (IVSS…VGLF), and 398–418 (GTYW…NFSM). The region spanning 227–422 (FLLALVIGVT…LFNFSMSRYS (196 aa)) is the ABC transmembrane type-1 domain.

This sequence belongs to the binding-protein-dependent transport system permease family. HisMQ subfamily. BztB and BztC form a heterodimer which can form a membrane complex with a homodimer of BztD.

Its subcellular location is the cell inner membrane. Functionally, part of a binding-protein-dependent transport system for glutamate, glutamine, aspartate and asparagine. Probably responsible for the translocation of the substrate across the membrane. The polypeptide is Glutamate/glutamine/aspartate/asparagine transport system permease protein BztC (bztC) (Rhodobacter capsulatus (strain ATCC BAA-309 / NBRC 16581 / SB1003)).